Consider the following 904-residue polypeptide: Pyrimidine pathway regulatory protein 1 (904 aa).

The span at 1–11 (MKQKKFNSKKS) shows a compositional bias: basic residues. The disordered stretch occupies residues 1 to 27 (MKQKKFNSKKSNRTDLSKRGDSPNIGI). A compositionally biased stretch (basic and acidic residues) spans 12-21 (NRTDLSKRGD). Zn(2+) is bound by residues C34, C37, C44, C51, C54, and C61. Positions 34-61 (CKRCRLKKIKCDQEFPSCKRCAKLEVPC) form a DNA-binding region, zn(2)-C6 fungal-type. The disordered stretch occupies residues 883 to 904 (GNEGESSYDISKGKNSESGGIF).

Binds DNA as a homodimer.

It is found in the nucleus. Positive regulator of URA1 and URA3 expression. This chain is Pyrimidine pathway regulatory protein 1 (PPR1), found in Saccharomyces cerevisiae (strain ATCC 204508 / S288c) (Baker's yeast).